The chain runs to 469 residues: Flap endonuclease 1-B (469 aa).

The N-domain stretch occupies residues 1–103 (MGIKGLTGLL…GVLSKRLERR (103 aa)). Mg(2+) is bound at residue Asp32. DNA-binding residues include Arg45 and Arg69. Positions 85, 157, 159, 183, and 185 each coordinate Mg(2+). Residues 121–257 (DVDRFSRRTV…KSALKLIREY (137 aa)) are I-domain. Glu157 contributes to the DNA binding site. Positions 235 and 237 each coordinate DNA. Asp237 contacts Mg(2+). The interval 274 to 354 (QKAAQAAVES…GGMQIPEEWP (81 aa)) is disordered. Acidic residues-rich tracts occupy residues 282 to 295 (ESDE…EDEP) and 302 to 317 (EMPD…EEEA). Over residues 326–342 (PKKKKASSKTKEKRKGK) the composition is skewed to basic residues. An interaction with PCNA region spans residues 412–420 (QQGRLDGFF). The segment at 424–469 (PKEKAAAPAPVGKAKGKGKIDAKAKGTKRKVDEKAESSAGKKPRKK) is disordered. The segment covering 441-459 (GKIDAKAKGTKRKVDEKAE) has biased composition (basic and acidic residues).

This sequence belongs to the XPG/RAD2 endonuclease family. FEN1 subfamily. Interacts with PCNA. Three molecules of FEN1 bind to one PCNA trimer with each molecule binding to one PCNA monomer. PCNA stimulates the nuclease activity without altering cleavage specificity. The cofactor is Mg(2+). Post-translationally, phosphorylated. Phosphorylation upon DNA damage induces relocalization to the nuclear plasma.

Its subcellular location is the nucleus. It localises to the nucleolus. The protein resides in the nucleoplasm. It is found in the mitochondrion. Its function is as follows. Structure-specific nuclease with 5'-flap endonuclease and 5'-3' exonuclease activities involved in DNA replication and repair. During DNA replication, cleaves the 5'-overhanging flap structure that is generated by displacement synthesis when DNA polymerase encounters the 5'-end of a downstream Okazaki fragment. It enters the flap from the 5'-end and then tracks to cleave the flap base, leaving a nick for ligation. Also involved in the long patch base excision repair (LP-BER) pathway, by cleaving within the apurinic/apyrimidinic (AP) site-terminated flap. Acts as a genome stabilization factor that prevents flaps from equilibrating into structures that lead to duplications and deletions. Also possesses 5'-3' exonuclease activity on nicked or gapped double-stranded DNA, and exhibits RNase H activity. Also involved in replication and repair of rDNA and in repairing mitochondrial DNA. The polypeptide is Flap endonuclease 1-B (Laccaria bicolor (strain S238N-H82 / ATCC MYA-4686) (Bicoloured deceiver)).